The primary structure comprises 388 residues: S-adenosylmethionine synthase (388 aa).

Residue His16 participates in ATP binding. Asp18 serves as a coordination point for Mg(2+). Residue Glu44 coordinates K(+). L-methionine-binding residues include Glu57 and Gln100. The flexible loop stretch occupies residues 100–110; it reads QSPEIAQGVDR. Residues 165-167, Asp240, 246-247, Ala263, and Lys267 contribute to the ATP site; these read DAK and RK. Asp240 lines the L-methionine pocket. Lys271 provides a ligand contact to L-methionine.

The protein belongs to the AdoMet synthase family. As to quaternary structure, homotetramer; dimer of dimers. Requires Mg(2+) as cofactor. K(+) is required as a cofactor.

The protein resides in the cytoplasm. It catalyses the reaction L-methionine + ATP + H2O = S-adenosyl-L-methionine + phosphate + diphosphate. It participates in amino-acid biosynthesis; S-adenosyl-L-methionine biosynthesis; S-adenosyl-L-methionine from L-methionine: step 1/1. Its function is as follows. Catalyzes the formation of S-adenosylmethionine (AdoMet) from methionine and ATP. The overall synthetic reaction is composed of two sequential steps, AdoMet formation and the subsequent tripolyphosphate hydrolysis which occurs prior to release of AdoMet from the enzyme. The chain is S-adenosylmethionine synthase from Acinetobacter baylyi (strain ATCC 33305 / BD413 / ADP1).